The following is a 381-amino-acid chain: Chymosin (381 aa).

An N-terminal signal peptide occupies residues 1-16; that stretch reads MRCLVVLLAALALSQA. A propeptide spans 17–58 (activation peptide); the sequence is SGITRIPLHKGKTLRKALKERGLLEDFLQRQQYAVSSKYSSL. Residues 74-378 enclose the Peptidase A1 domain; the sequence is YFGKIYIGTP…DRANNRVGLA (305 aa). The active site involves Asp92. Cys105 and Cys110 are oxidised to a cystine. N-linked (GlcNAc...) asparagine glycosylation occurs at Asn158. The cysteines at positions 265 and 269 are disulfide-linked. The active site involves Asp274. A disulfide bridge links Cys308 with Cys341. N-linked (GlcNAc...) asparagine glycosylation occurs at Asn349.

It belongs to the peptidase A1 family.

The enzyme catalyses Broad specificity similar to that of pepsin A. Clots milk by cleavage of a single 104-Ser-Phe-|-Met-Ala-107 bond in kappa-chain of casein.. Chymosin is synthesized in the mucosa of the abomasum (fourth stomach) of young (unweaned) ruminants. The enzyme hydrolyzes casein to paracasein. The protein is Chymosin of Camelus dromedarius (Dromedary).